The following is a 63-amino-acid chain: uncharacterized protein (63 aa).

It is found in the mitochondrion. This is an uncharacterized protein from Marchantia polymorpha (Common liverwort).